The chain runs to 75 residues: Kappa-scoloptoxin(03)-Ssm1e (75 aa).

The first 23 residues, 1-23, serve as a signal peptide directing secretion; that stretch reads MKSSMAILLVMALIIFTLDKNYS.

Belongs to the scoloptoxin-03 family. In terms of processing, contains 3 disulfide bonds. In terms of tissue distribution, expressed by the venom gland.

The protein localises to the secreted. Its function is as follows. Inhibits voltage-gated potassium channels. The chain is Kappa-scoloptoxin(03)-Ssm1e from Scolopendra mutilans (Chinese red-headed centipede).